A 293-amino-acid polypeptide reads, in one-letter code: Cytochrome c biogenesis protein CcsA (293 aa).

The next 8 helical transmembrane spans lie at 12-32, 39-59, 78-98, 99-119, 142-162, 216-236, 250-267, and 273-293; these read INILAFLGALVSSLFYWAKLT, VFSLPKFCLIFSNCIIAGMLL, LFLSWVLNIITIIFVDKLSII, GAIGSSAVTLIIGYANYILPP, VMIFSYGLLIMGAFLSLIYVI, FISLGFISLTLGIISGSVWAN, TWALITWLVFATYLHIRI, and KIYASLVASLGLIVICFVTWE.

Belongs to the CcmF/CycK/Ccl1/NrfE/CcsA family. May interact with Ccs1.

The protein resides in the plastid. The protein localises to the chloroplast thylakoid membrane. Functionally, required during biogenesis of c-type cytochromes (cytochrome c6 and cytochrome f) at the step of heme attachment. This Cyanidium caldarium (Red alga) protein is Cytochrome c biogenesis protein CcsA.